The chain runs to 373 residues: Histidinol-phosphate aminotransferase (373 aa).

The segment covering 1 to 10 has biased composition (polar residues); sequence MTGVPGSSIT. The tract at residues 1 to 45 is disordered; that stretch reads MTGVPGSSITLDDLPLRDDLRGKSPYGAPQLSVPVRLNTNENPHP. At K237 the chain carries N6-(pyridoxal phosphate)lysine.

Belongs to the class-II pyridoxal-phosphate-dependent aminotransferase family. Histidinol-phosphate aminotransferase subfamily. Homodimer. It depends on pyridoxal 5'-phosphate as a cofactor.

It catalyses the reaction L-histidinol phosphate + 2-oxoglutarate = 3-(imidazol-4-yl)-2-oxopropyl phosphate + L-glutamate. Its pathway is amino-acid biosynthesis; L-histidine biosynthesis; L-histidine from 5-phospho-alpha-D-ribose 1-diphosphate: step 7/9. This chain is Histidinol-phosphate aminotransferase, found in Mycolicibacterium vanbaalenii (strain DSM 7251 / JCM 13017 / BCRC 16820 / KCTC 9966 / NRRL B-24157 / PYR-1) (Mycobacterium vanbaalenii).